The chain runs to 108 residues: Iron-sulfur cluster assembly protein CyaY (108 aa).

The protein belongs to the frataxin family.

Functionally, involved in iron-sulfur (Fe-S) cluster assembly. May act as a regulator of Fe-S biogenesis. This is Iron-sulfur cluster assembly protein CyaY from Burkholderia vietnamiensis (strain G4 / LMG 22486) (Burkholderia cepacia (strain R1808)).